Reading from the N-terminus, the 309-residue chain is Coenzyme PQQ synthesis protein B (309 aa).

Belongs to the PqqB family.

The protein operates within cofactor biosynthesis; pyrroloquinoline quinone biosynthesis. May be involved in the transport of PQQ or its precursor to the periplasm. The sequence is that of Coenzyme PQQ synthesis protein B from Nitrosococcus oceani (strain ATCC 19707 / BCRC 17464 / JCM 30415 / NCIMB 11848 / C-107).